A 32-amino-acid chain; its full sequence is Photosystem II reaction center protein T (32 aa).

A helical membrane pass occupies residues 3–23; the sequence is ALVYTFLLVATLGIIFFAIFF.

Belongs to the PsbT family. In terms of assembly, PSII is composed of 1 copy each of membrane proteins PsbA, PsbB, PsbC, PsbD, PsbE, PsbF, PsbH, PsbI, PsbJ, PsbK, PsbL, PsbM, PsbT, PsbY, PsbZ, Psb30/Ycf12, at least 3 peripheral proteins of the oxygen-evolving complex and a large number of cofactors. It forms dimeric complexes.

The protein resides in the plastid. It is found in the chloroplast thylakoid membrane. Found at the monomer-monomer interface of the photosystem II (PS II) dimer, plays a role in assembly and dimerization of PSII. PSII is a light-driven water plastoquinone oxidoreductase, using light energy to abstract electrons from H(2)O, generating a proton gradient subsequently used for ATP formation. The chain is Photosystem II reaction center protein T from Psilotum nudum (Whisk fern).